The sequence spans 855 residues: Protein KRI1 homolog (855 aa).

6 disordered regions span residues 47-67, 82-117, 130-196, 312-342, 424-453, and 589-855; these read VSES…VDPK, KDPC…KAKP, EHNG…KTKE, SLRR…MKEL, YDPR…CDYD, and KSLY…KKDN. Positions 48–64 are enriched in acidic residues; the sequence is SESEFDSDSSSSEEDEV. Residues 82–91 are compositionally biased toward basic and acidic residues; the sequence is KDPCIYDKGT. Phosphoserine occurs at positions 95, 97, 98, 137, and 138. Positions 160 to 176 are enriched in basic and acidic residues; sequence EEERRLKAEFRKVMNKE. Serine 179 carries the phosphoserine modification. Positions 307–362 form a coiled coil; the sequence is RTIEQSLRRTDDKRKEKRKELKERKDQEKQQKMKELELVKEMKRKEIDEKIRKLKA. Over residues 441 to 452 the composition is skewed to acidic residues; that stretch reads CEDDDFNMDCDY. Residues 609–619 are compositionally biased toward low complexity; sequence VTPAEATAPAE. Basic residues predominate over residues 630–640; sequence KSKRKRLKRKA. Basic and acidic residues-rich tracts occupy residues 650–664 and 674–692; these read VLKE…KEAD and SSKK…DANQ. 3 stretches are compositionally biased toward polar residues: residues 720 to 748, 756 to 773, and 792 to 805; these read VQNG…TTES, SNGN…QQRQ, and ANGT…NQKP. The span at 812 to 826 shows a compositional bias: low complexity; it reads KKTNNFKAKNKQNNN. Basic residues predominate over residues 842-855; sequence RKFHKREKYGKKDN.

Belongs to the KRI1 family.

The protein is Protein KRI1 homolog of Drosophila melanogaster (Fruit fly).